Here is an 86-residue protein sequence, read N- to C-terminus: Large ribosomal subunit protein bL27 (86 aa).

Residues 1–22 (MAHKKAGGSTRNGRDSESKRLG) form a disordered region.

Belongs to the bacterial ribosomal protein bL27 family.

The sequence is that of Large ribosomal subunit protein bL27 from Vibrio cholerae serotype O1 (strain ATCC 39315 / El Tor Inaba N16961).